The sequence spans 264 residues: S-adenosylmethionine decarboxylase proenzyme (264 aa).

Ser-113 functions as the Schiff-base intermediate with substrate; via pyruvic acid in the catalytic mechanism. Residue Ser-113 is modified to Pyruvic acid (Ser); by autocatalysis. Catalysis depends on His-118, which acts as the Proton acceptor; for processing activity. Cys-141 functions as the Proton donor; for catalytic activity in the catalytic mechanism.

Belongs to the prokaryotic AdoMetDC family. Type 2 subfamily. In terms of assembly, heterooctamer of four alpha and four beta chains arranged as a tetramer of alpha/beta heterodimers. Pyruvate is required as a cofactor. In terms of processing, is synthesized initially as an inactive proenzyme. Formation of the active enzyme involves a self-maturation process in which the active site pyruvoyl group is generated from an internal serine residue via an autocatalytic post-translational modification. Two non-identical subunits are generated from the proenzyme in this reaction, and the pyruvate is formed at the N-terminus of the alpha chain, which is derived from the carboxyl end of the proenzyme. The post-translation cleavage follows an unusual pathway, termed non-hydrolytic serinolysis, in which the side chain hydroxyl group of the serine supplies its oxygen atom to form the C-terminus of the beta chain, while the remainder of the serine residue undergoes an oxidative deamination to produce ammonia and the pyruvoyl group blocking the N-terminus of the alpha chain.

The catalysed reaction is S-adenosyl-L-methionine + H(+) = S-adenosyl 3-(methylsulfanyl)propylamine + CO2. The protein operates within amine and polyamine biosynthesis; S-adenosylmethioninamine biosynthesis; S-adenosylmethioninamine from S-adenosyl-L-methionine: step 1/1. In terms of biological role, catalyzes the decarboxylation of S-adenosylmethionine to S-adenosylmethioninamine (dcAdoMet), the propylamine donor required for the synthesis of the polyamines spermine and spermidine from the diamine putrescine. This Xanthomonas campestris pv. campestris (strain B100) protein is S-adenosylmethionine decarboxylase proenzyme.